Consider the following 310-residue polypeptide: tRNA uridine(34) hydroxylase (310 aa).

The Rhodanese domain occupies D134 to S232. C192 (cysteine persulfide intermediate) is an active-site residue.

It belongs to the TrhO family.

The catalysed reaction is uridine(34) in tRNA + AH2 + O2 = 5-hydroxyuridine(34) in tRNA + A + H2O. Its function is as follows. Catalyzes oxygen-dependent 5-hydroxyuridine (ho5U) modification at position 34 in tRNAs. In Prochlorococcus marinus (strain MIT 9303), this protein is tRNA uridine(34) hydroxylase.